The chain runs to 66 residues: UPF0457 protein BA_2525/GBAA_2525/BAS2348 (66 aa).

This sequence belongs to the UPF0457 family.

The polypeptide is UPF0457 protein BA_2525/GBAA_2525/BAS2348 (Bacillus anthracis).